An 88-amino-acid polypeptide reads, in one-letter code: Alpha-latrotoxin-associated low molecular weight protein (88 aa).

The N-terminal stretch at 1-18 (MSKLFFVVFLCLIISVFA) is a signal peptide.

Belongs to the arthropod CHH/MIH/GIH/VIH hormone family. Expressed by the venom gland.

The protein resides in the secreted. May increase the toxicity of alpha-latrotoxin and/or other venom components. Is non-toxic to mice and to the cockroach Periplaneta americana. This Latrodectus tredecimguttatus (Mediterranean black widow spider) protein is Alpha-latrotoxin-associated low molecular weight protein.